The sequence spans 90 residues: Probable Fe(2+)-trafficking protein (90 aa).

Belongs to the Fe(2+)-trafficking protein family.

Functionally, could be a mediator in iron transactions between iron acquisition and iron-requiring processes, such as synthesis and/or repair of Fe-S clusters in biosynthetic enzymes. This chain is Probable Fe(2+)-trafficking protein, found in Verminephrobacter eiseniae (strain EF01-2).